The sequence spans 450 residues: Probable ECA polymerase (450 aa).

11 helical membrane-spanning segments follow: residues phenylalanine 6–phenylalanine 26, valine 37–leucine 57, valine 63–alanine 83, valine 118–leucine 138, glycine 155–leucine 175, alanine 181–glycine 201, isoleucine 207–tryptophan 227, methionine 228–tyrosine 248, leucine 341–isoleucine 361, tyrosine 378–alanine 398, and valine 410–phenylalanine 430.

This sequence belongs to the WzyE family. As to quaternary structure, probably part of a complex composed of WzxE, WzyE and WzzE.

The protein resides in the cell inner membrane. The protein operates within bacterial outer membrane biogenesis; enterobacterial common antigen biosynthesis. Its function is as follows. Probably involved in the polymerization of enterobacterial common antigen (ECA) trisaccharide repeat units. In Escherichia fergusonii (strain ATCC 35469 / DSM 13698 / CCUG 18766 / IAM 14443 / JCM 21226 / LMG 7866 / NBRC 102419 / NCTC 12128 / CDC 0568-73), this protein is Probable ECA polymerase.